Here is a 503-residue protein sequence, read N- to C-terminus: Lysine--tRNA ligase (503 aa).

Positions 414 and 421 each coordinate Mg(2+).

The protein belongs to the class-II aminoacyl-tRNA synthetase family. In terms of assembly, homodimer. The cofactor is Mg(2+).

The protein resides in the cytoplasm. The catalysed reaction is tRNA(Lys) + L-lysine + ATP = L-lysyl-tRNA(Lys) + AMP + diphosphate. The polypeptide is Lysine--tRNA ligase (Neisseria meningitidis serogroup A / serotype 4A (strain DSM 15465 / Z2491)).